The sequence spans 117 residues: Non-specific lipid-transfer protein B (117 aa).

The N-terminal stretch at Met1–Ala25 is a signal peptide. 4 disulfide bridges follow: Cys29/Cys76, Cys39/Cys53, Cys54/Cys99, and Cys74/Cys113.

This sequence belongs to the plant LTP family.

Functionally, plant non-specific lipid-transfer proteins transfer phospholipids as well as galactolipids across membranes. May play a role in wax or cutin deposition in the cell walls of expanding epidermal cells and certain secretory tissues. This is Non-specific lipid-transfer protein B (WAX9B) from Brassica oleracea var. italica (Broccoli).